We begin with the raw amino-acid sequence, 271 residues long: Thiazole synthase (271 aa).

Residue Lys-95 is the Schiff-base intermediate with DXP of the active site. Residues Gly-156, 182-183, and 204-205 contribute to the 1-deoxy-D-xylulose 5-phosphate site; these read AG and NT.

The protein belongs to the ThiG family. As to quaternary structure, homotetramer. Forms heterodimers with either ThiH or ThiS.

Its subcellular location is the cytoplasm. It carries out the reaction [ThiS sulfur-carrier protein]-C-terminal-Gly-aminoethanethioate + 2-iminoacetate + 1-deoxy-D-xylulose 5-phosphate = [ThiS sulfur-carrier protein]-C-terminal Gly-Gly + 2-[(2R,5Z)-2-carboxy-4-methylthiazol-5(2H)-ylidene]ethyl phosphate + 2 H2O + H(+). Its pathway is cofactor biosynthesis; thiamine diphosphate biosynthesis. Catalyzes the rearrangement of 1-deoxy-D-xylulose 5-phosphate (DXP) to produce the thiazole phosphate moiety of thiamine. Sulfur is provided by the thiocarboxylate moiety of the carrier protein ThiS. In vitro, sulfur can be provided by H(2)S. This is Thiazole synthase from Shewanella amazonensis (strain ATCC BAA-1098 / SB2B).